Reading from the N-terminus, the 91-residue chain is Signal recognition particle 19 kDa protein (91 aa).

It belongs to the SRP19 family. As to quaternary structure, part of the signal recognition particle protein translocation system, which is composed of SRP and FtsY. Archaeal SRP consists of a 7S RNA molecule of 300 nucleotides and two protein subunits: SRP54 and SRP19.

The protein resides in the cytoplasm. Its function is as follows. Involved in targeting and insertion of nascent membrane proteins into the cytoplasmic membrane. Binds directly to 7S RNA and mediates binding of the 54 kDa subunit of the SRP. This is Signal recognition particle 19 kDa protein from Methanoregula boonei (strain DSM 21154 / JCM 14090 / 6A8).